We begin with the raw amino-acid sequence, 154 residues long: Lipoprotein signal peptidase (154 aa).

The next 2 helical transmembrane spans lie at 55 to 75 (GHMW…IYIM) and 84 to 104 (LFSI…IDRI). Catalysis depends on residues Asp111 and Asp129. Residues 124 to 144 (IFNVADAALSVGVVLMLVYVF) form a helical membrane-spanning segment.

Belongs to the peptidase A8 family.

The protein localises to the cell membrane. The enzyme catalyses Release of signal peptides from bacterial membrane prolipoproteins. Hydrolyzes -Xaa-Yaa-Zaa-|-(S,diacylglyceryl)Cys-, in which Xaa is hydrophobic (preferably Leu), and Yaa (Ala or Ser) and Zaa (Gly or Ala) have small, neutral side chains.. Its pathway is protein modification; lipoprotein biosynthesis (signal peptide cleavage). Its function is as follows. This protein specifically catalyzes the removal of signal peptides from prolipoproteins. In Listeria innocua serovar 6a (strain ATCC BAA-680 / CLIP 11262), this protein is Lipoprotein signal peptidase.